Reading from the N-terminus, the 75-residue chain is CDC42 small effector protein 1 (75 aa).

2 S-palmitoyl cysteine lipidation sites follow: cysteine 10 and cysteine 11. The CRIB domain maps to 30–43; the sequence is IGEPTNFVHLTHIG. The disordered stretch occupies residues 45 to 75; that stretch reads GEMADGMQPSGPIKEQMRSKVPHANGRNSLL.

It belongs to the CDC42SE/SPEC family.

It is found in the cytoplasm. It localises to the cytoskeleton. The protein resides in the cell membrane. In terms of biological role, probably involved in the organization of the actin cytoskeleton by acting downstream of CDC42, inducing actin filament assembly. This chain is CDC42 small effector protein 1 (cdc42se1), found in Danio rerio (Zebrafish).